The primary structure comprises 70 residues: Small ribosomal subunit protein bS21 (70 aa).

This sequence belongs to the bacterial ribosomal protein bS21 family.

This chain is Small ribosomal subunit protein bS21, found in Delftia acidovorans (strain DSM 14801 / SPH-1).